Reading from the N-terminus, the 87-residue chain is uncharacterized protein (87 aa).

A helical transmembrane segment spans residues 48-70 (GIYIPHTLIFWMCPRAMGTAITF).

The protein resides in the host membrane. This is an uncharacterized protein from Gallid herpesvirus 2 (strain Chicken/Md5/ATCC VR-987) (GaHV-2).